We begin with the raw amino-acid sequence, 308 residues long: Leucine-rich repeat-containing protein 59 (308 aa).

At 1 to 248 the chain is on the cytoplasmic side; that stretch reads MARANGRSQN…LARRQSRLRK (248 aa). LRR repeat units follow at residues 10-31, 40-61, 63-84, 86-107, and 109-128; these read NLRDKLDGNELDLSLSDLSEVP, KATALDLSCNKLTSLPDDFCNL, YIVRLDLSKNQIAQLPSEFGRL, NLQHLDLLQNRIVALPVSFAQL, and SLKWLDLKDNPLKPALAKVA. A coiled-coil region spans residues 154 to 223; it reads DHERELQRKL…NNNKKKAEEE (70 aa). Basic and acidic residues-rich tracts occupy residues 170–187, 194–203, and 218–237; these read KQRLEAQQRVKEEQDREL, QQKERKRRDY, and KKAEEEPSENHKPVPTPKEK. The interval 170–240 is disordered; it reads KQRLEAQQRV…VPTPKEKKLA (71 aa). A helical transmembrane segment spans residues 249 to 269; it reads IACILLFGLMVALLGVVACRF. Topologically, residues 270–308 are lumenal; that stretch reads TDLKTFEVCRSVNAVYKETLSALHSNPVLERFLQDPSSQ.

As to quaternary structure, interacts with SGO1.

The protein resides in the microsome membrane. It localises to the endoplasmic reticulum membrane. It is found in the nucleus envelope. In terms of biological role, required for nuclear import of FGF1. The protein is Leucine-rich repeat-containing protein 59 (lrrc59) of Xenopus tropicalis (Western clawed frog).